Reading from the N-terminus, the 60-residue chain is Large ribosomal subunit protein bL32 (60 aa).

The segment covering 1 to 23 (MAKHPVPKKKTSKSKRDMRRSHH) has biased composition (basic residues). The tract at residues 1-26 (MAKHPVPKKKTSKSKRDMRRSHHALV) is disordered.

It belongs to the bacterial ribosomal protein bL32 family.

The sequence is that of Large ribosomal subunit protein bL32 from Deinococcus geothermalis (strain DSM 11300 / CIP 105573 / AG-3a).